A 205-amino-acid chain; its full sequence is Spermatogenesis-associated protein 24 (205 aa).

A coiled-coil region spans residues 17–166; that stretch reads LAFDQLRDVI…QQKQIFRNHM (150 aa). The required for interaction with CBX5 and TBPL1 stretch occupies residues 138–185; that stretch reads EDILNGKENEIKELQQVISQQKQIFRNHMSDFRIQKQQESYMAQVLDQ. Residues 180-205 are disordered; the sequence is AQVLDQKHKKASGTRQAHSHQHPREK. Residues 186–205 are compositionally biased toward basic residues; the sequence is KHKKASGTRQAHSHQHPREK.

It belongs to the SPATA24 family. As to quaternary structure, homodimer. Interacts with CBX3, CBX5, GMNN, GTF2B, TBPL1 and the polycomb proteins PHCF2, RNF2 and SCMH1 but not with CBX1 or PCGF2.

It localises to the cytoplasm. The protein resides in the nucleus. It is found in the nucleolus. Its subcellular location is the nucleoplasm. Its function is as follows. Binds DNA with high affinity but does not bind to TATA boxes. Synergises with GMNN and TBP in activation of TATA box-containing promoters and with GMNN and TBPL1 in activation of the NF1 TATA-less promoter. May play a role in cytoplasm movement and removal during spermiogenesis. The polypeptide is Spermatogenesis-associated protein 24 (SPATA24) (Macaca fascicularis (Crab-eating macaque)).